The sequence spans 153 residues: Protein SprT-like (153 aa).

One can recognise a SprT-like domain in the interval 6–148; sequence LQQLTEQLSL…CGKCGGKIKE (143 aa). Histidine 67 lines the Zn(2+) pocket. Glutamate 68 is an active-site residue. Residue histidine 71 participates in Zn(2+) binding.

This sequence belongs to the SprT family. Zn(2+) serves as cofactor.

Its subcellular location is the cytoplasm. In Bacillus licheniformis (strain ATCC 14580 / DSM 13 / JCM 2505 / CCUG 7422 / NBRC 12200 / NCIMB 9375 / NCTC 10341 / NRRL NRS-1264 / Gibson 46), this protein is Protein SprT-like.